Reading from the N-terminus, the 110-residue chain is ORC1-type DNA replication protein 3 (110 aa).

An ATP-binding site is contributed by 8 to 12 (SGKSL).

The protein belongs to the CDC6/cdc18 family.

Functionally, involved in regulation of DNA replication. This Halobacterium salinarum (strain ATCC 700922 / JCM 11081 / NRC-1) (Halobacterium halobium) protein is ORC1-type DNA replication protein 3 (orc3).